We begin with the raw amino-acid sequence, 347 residues long: Ketol-acid reductoisomerase (NADP(+)) (347 aa).

Residues 1–185 form the KARI N-terminal Rossmann domain; that stretch reads MKIYYDEDAN…GGTRAGVLET (185 aa). NADP(+) contacts are provided by residues 24-27, R47, S50, S52, and 82-85; these read YGSQ and DEFQ. Residue H107 is part of the active site. An NADP(+)-binding site is contributed by G133. A KARI C-terminal knotted domain is found at 186–336; the sequence is SFKEETETDL…AELRSKMKFL (151 aa). Residues D194, E198, E230, and E234 each coordinate Mg(2+). S255 serves as a coordination point for substrate.

It belongs to the ketol-acid reductoisomerase family. Requires Mg(2+) as cofactor.

It catalyses the reaction (2R)-2,3-dihydroxy-3-methylbutanoate + NADP(+) = (2S)-2-acetolactate + NADPH + H(+). It carries out the reaction (2R,3R)-2,3-dihydroxy-3-methylpentanoate + NADP(+) = (S)-2-ethyl-2-hydroxy-3-oxobutanoate + NADPH + H(+). It participates in amino-acid biosynthesis; L-isoleucine biosynthesis; L-isoleucine from 2-oxobutanoate: step 2/4. It functions in the pathway amino-acid biosynthesis; L-valine biosynthesis; L-valine from pyruvate: step 2/4. In terms of biological role, involved in the biosynthesis of branched-chain amino acids (BCAA). Catalyzes an alkyl-migration followed by a ketol-acid reduction of (S)-2-acetolactate (S2AL) to yield (R)-2,3-dihydroxy-isovalerate. In the isomerase reaction, S2AL is rearranged via a Mg-dependent methyl migration to produce 3-hydroxy-3-methyl-2-ketobutyrate (HMKB). In the reductase reaction, this 2-ketoacid undergoes a metal-dependent reduction by NADPH to yield (R)-2,3-dihydroxy-isovalerate. The polypeptide is Ketol-acid reductoisomerase (NADP(+)) (Gamma-proteobacterium EBAC31A08).